Reading from the N-terminus, the 681-residue chain is Pumilio domain-containing protein C6G9.14 (681 aa).

Disordered stretches follow at residues 180–210 (RPGLSSYTPGPSTSRRSISSSSNLGGNPGLI) and 273–322 (ASTA…NVPS). 2 stretches are compositionally biased toward low complexity: residues 187–210 (TPGPSTSRRSISSSSNLGGNPGLI) and 273–286 (ASTASTGSTDSSGS). Residues 319 to 659 (NVPSLISDDP…RILSKLERRH (341 aa)) form the PUM-HD domain. Pumilio repeat units lie at residues 342–378 (SLQNSNILSFCKDQHGCRYLQRLLEKKNQSHIDAVFA), 379–414 (ETHPYLAVLMVDAFGNYLCQKLFEHASEAQRSTFIQ), 415–451 (IIAPKLVPISFNMHGTRALQKIIDLVSSPDQISCIVN), 452–487 (ALRPNVVLLTKDLNGNHVIQKCLNKFSQEDCQFIFD), 488–523 (AICEDPLDVSTHRHGCCVVQRCFDHASPAQIEQLVE), 524–559 (HIVPHALTLVQDAFGNYVLQYVLELNNPNHTEAIIS), 560–595 (YFLYKVRALSTQKFSSNVMEKCIFFAPAAIKEKLIS), and 596–633 (ELMDEKHLPKLLRDSFANYVIQTALDNASVKQRAELVE). The span at 656–666 (ERRHPSSKEKP) shows a compositional bias: basic and acidic residues. The segment at 656-681 (ERRHPSSKEKPIVYSNSERVNTSSSA) is disordered. Residues 669–681 (YSNSERVNTSSSA) are compositionally biased toward polar residues.

In Schizosaccharomyces pombe (strain 972 / ATCC 24843) (Fission yeast), this protein is Pumilio domain-containing protein C6G9.14.